A 328-amino-acid polypeptide reads, in one-letter code: Coiled-coil domain-containing protein 54 (328 aa).

A coiled-coil region spans residues 122 to 151; the sequence is TTKDILSMKEDIKALKKKVTELEKQNSYSR. Thr182 carries the phosphothreonine modification. The segment covering 186 to 197 has biased composition (basic and acidic residues); sequence TDREMSSAEPEK. A disordered region spans residues 186-205; it reads TDREMSSAEPEKVPSYPKST.

The protein is Coiled-coil domain-containing protein 54 (CCDC54) of Macaca fascicularis (Crab-eating macaque).